We begin with the raw amino-acid sequence, 991 residues long: Phosphate metabolism protein 7 (991 aa).

At Met-1–Ala-9 the chain is on the extracellular side. A helical transmembrane segment spans residues Phe-10–Leu-30. Residues Leu-31–Arg-91 are Cytoplasmic-facing. Residues Tyr-92–Leu-112 form a helical membrane-spanning segment. Topologically, residues Pro-113 to Arg-138 are extracellular. Asn-115 and Asn-132 each carry an N-linked (GlcNAc...) asparagine glycan. A helical membrane pass occupies residues Phe-139–Lys-159. Residues Glu-160–Asn-388 lie on the Cytoplasmic side of the membrane. Residues Thr-389 to Ser-409 form a helical membrane-spanning segment. Residues Asn-410 to Gly-437 are Extracellular-facing. Residues Leu-438–Leu-458 form a helical membrane-spanning segment. At Gly-459 to Asp-471 the chain is on the cytoplasmic side. Residues Leu-472 to Ala-492 form a helical membrane-spanning segment. Residues Thr-493–Asn-523 lie on the Extracellular side of the membrane. The helical transmembrane segment at Phe-524 to Ala-544 threads the bilayer. Residues Val-545 to Gly-582 are Cytoplasmic-facing. A helical membrane pass occupies residues Ile-583–Phe-603. Position 604 (Ser-604) is a topological domain, extracellular. The helical transmembrane segment at Thr-605–Phe-625 threads the bilayer. Residues Ser-626 to Ala-637 lie on the Cytoplasmic side of the membrane. A helical transmembrane segment spans residues Leu-638–Met-658. Residues Ala-659–Thr-661 lie on the Extracellular side of the membrane. Residues Trp-662 to Met-682 form a helical membrane-spanning segment. Over Lys-683–Lys-991 the chain is Cytoplasmic. The tract at residues Lys-749–Ser-787 is disordered. The span at Asp-757 to Ser-785 shows a compositional bias: polar residues.

It belongs to the CSC1 (TC 1.A.17) family.

The protein resides in the cell membrane. Acts as an osmosensitive calcium-permeable cation channel. In Saccharomyces cerevisiae (strain ATCC 204508 / S288c) (Baker's yeast), this protein is Phosphate metabolism protein 7 (PHM7).